We begin with the raw amino-acid sequence, 360 residues long: Phospho-N-acetylmuramoyl-pentapeptide-transferase (360 aa).

Topologically, residues 1-25 (MLVWLAEHLVKYYSGFNVFSYLTFR) are periplasmic. The chain crosses the membrane as a helical span at residues 26 to 46 (AIVSLLTALFISLWMGPRMIA). Over 47-71 (RLQKLSFGQVVRNDGPESHFSKRGT) the chain is Cytoplasmic. Residues 72–92 (PTMGGIMILTAIVISVLLWAY) traverse the membrane as a helical segment. Pro-93 is a topological domain (periplasmic). Residues 94-114 (SNPYVWCVLVVLIGYGIIGFV) form a helical membrane-spanning segment. Topologically, residues 115–131 (DDYRKVVRKDTKGLIAR) are cytoplasmic. The chain crosses the membrane as a helical span at residues 132-152 (WKYFWMSVIALGVAFALYLVG). Over 153–167 (KDTPATQLVVPFFKD) the chain is Periplasmic. A helical transmembrane segment spans residues 168–188 (VMPQLGLFYILLSYFVIVGTG). Residues 189–198 (NAVNLTDGLD) lie on the Cytoplasmic side of the membrane. The helical transmembrane segment at 199–219 (GLAIMPTVFVAAGFALVAWAT) threads the bilayer. The Periplasmic portion of the chain corresponds to 220 to 235 (GNMNFANYLHIPYLRH). A helical membrane pass occupies residues 236–256 (AGELVIVCTAIVGAGLGFLWF). Residues 257 to 262 (NTYPAQ) are Cytoplasmic-facing. Residues 263 to 283 (VFMGDVGSLALGGALGIIAVL) traverse the membrane as a helical segment. Residues 284-287 (LRQE) lie on the Periplasmic side of the membrane. A helical membrane pass occupies residues 288–308 (FLLVIMGGVFVVETLSVILQV). The Cytoplasmic portion of the chain corresponds to 309-337 (GSFKLRGQRIFRMAPIHHHYELKGWPEPR). The chain crosses the membrane as a helical span at residues 338–358 (VIVRFWIISLMLVLIGLATLK). Residues 359 to 360 (VR) lie on the Periplasmic side of the membrane.

This sequence belongs to the glycosyltransferase 4 family. MraY subfamily. It depends on Mg(2+) as a cofactor.

Its subcellular location is the cell inner membrane. It carries out the reaction UDP-N-acetyl-alpha-D-muramoyl-L-alanyl-gamma-D-glutamyl-meso-2,6-diaminopimeloyl-D-alanyl-D-alanine + di-trans,octa-cis-undecaprenyl phosphate = di-trans,octa-cis-undecaprenyl diphospho-N-acetyl-alpha-D-muramoyl-L-alanyl-D-glutamyl-meso-2,6-diaminopimeloyl-D-alanyl-D-alanine + UMP. It functions in the pathway cell wall biogenesis; peptidoglycan biosynthesis. Functionally, catalyzes the initial step of the lipid cycle reactions in the biosynthesis of the cell wall peptidoglycan: transfers peptidoglycan precursor phospho-MurNAc-pentapeptide from UDP-MurNAc-pentapeptide onto the lipid carrier undecaprenyl phosphate, yielding undecaprenyl-pyrophosphoryl-MurNAc-pentapeptide, known as lipid I. In Salmonella agona (strain SL483), this protein is Phospho-N-acetylmuramoyl-pentapeptide-transferase.